A 320-amino-acid polypeptide reads, in one-letter code: Malate dehydrogenase (320 aa).

Residues 10-15 and Asp-34 contribute to the NAD(+) site; that span reads GSGMIG. Substrate is bound by residues Arg-83 and Arg-89. NAD(+)-binding positions include Asn-96 and 119 to 121; that span reads ITN. Residues Asn-121 and Arg-152 each coordinate substrate. The active-site Proton acceptor is His-176.

Belongs to the LDH/MDH superfamily. MDH type 3 family.

It carries out the reaction (S)-malate + NAD(+) = oxaloacetate + NADH + H(+). Catalyzes the reversible oxidation of malate to oxaloacetate. In Brucella suis (strain ATCC 23445 / NCTC 10510), this protein is Malate dehydrogenase.